Consider the following 70-residue polypeptide: UPF0519 protein D (70 aa).

This sequence belongs to the UPF0519 family.

The protein is UPF0519 protein D of Dictyostelium discoideum (Social amoeba).